The primary structure comprises 702 residues: Polyribonucleotide nucleotidyltransferase (702 aa).

Aspartate 487 and aspartate 493 together coordinate Mg(2+). The KH domain occupies 554–613; it reads PRLLTIKIHPDKIREVIGKGGSTIQAITKETGTQIDIQDDGTIVIASVNAIAAQAAKARI. The S1 motif domain maps to 623 to 691; that stretch reads GRIYEGKVAK…KQGRIRLSMK (69 aa).

It belongs to the polyribonucleotide nucleotidyltransferase family. Component of the RNA degradosome, which is a multiprotein complex involved in RNA processing and mRNA degradation. Mg(2+) serves as cofactor.

The protein resides in the cytoplasm. It catalyses the reaction RNA(n+1) + phosphate = RNA(n) + a ribonucleoside 5'-diphosphate. Its function is as follows. Involved in mRNA degradation. Catalyzes the phosphorolysis of single-stranded polyribonucleotides processively in the 3'- to 5'-direction. This chain is Polyribonucleotide nucleotidyltransferase, found in Stenotrophomonas maltophilia (strain K279a).